A 140-amino-acid polypeptide reads, in one-letter code: ATP synthase epsilon chain (140 aa).

It belongs to the ATPase epsilon chain family. As to quaternary structure, F-type ATPases have 2 components, CF(1) - the catalytic core - and CF(0) - the membrane proton channel. CF(1) has five subunits: alpha(3), beta(3), gamma(1), delta(1), epsilon(1). CF(0) has three main subunits: a, b and c.

It is found in the cell inner membrane. In terms of biological role, produces ATP from ADP in the presence of a proton gradient across the membrane. This is ATP synthase epsilon chain from Bordetella bronchiseptica (strain ATCC BAA-588 / NCTC 13252 / RB50) (Alcaligenes bronchisepticus).